A 920-amino-acid polypeptide reads, in one-letter code: Ubiquitin ligase-binding protein BUL2 (920 aa).

Over residues 1–10 (MTFTFSTSSR) the composition is skewed to polar residues. The tract at residues 1–89 (MTFTFSTSSR…EENSLEMDCT (89 aa)) is disordered. Thr22 carries the post-translational modification Phosphothreonine. A compositionally biased stretch (polar residues) spans 35-57 (QQLSSNSTDNSLHPNSGQTPRAS). The span at 73–82 (DRLRQEREEN) shows a compositional bias: basic and acidic residues. A PY-motif motif is present at residues 129–133 (FPPSY). Ser557 carries the post-translational modification Phosphoserine.

Belongs to the BUL1 family. As to quaternary structure, component of the RSP5-BUL1/2 ubiquitin ligase complex composed of at least RSP5 and BUL1 or BUL2.

The protein localises to the cytoplasm. It functions in the pathway protein modification; protein ubiquitination. In terms of biological role, component of a RSP5 ubiquitin ligase complex which specifies polyubiquitination and intracellular trafficking of the general amino acid permease GAP1 as well as other permeases such as PMA1. The RSP5-BUL1/2 complex is also necessary for the heat-shock element (HSE)-mediated gene expression, nitrogen starvation GLN3-dependent transcription and pressure-induced differential regulation of the 2 tryptophan permeases TAT1 and TAT2. This is Ubiquitin ligase-binding protein BUL2 (BUL2) from Saccharomyces cerevisiae (strain ATCC 204508 / S288c) (Baker's yeast).